Reading from the N-terminus, the 246-residue chain is 3-deoxy-manno-octulosonate cytidylyltransferase (246 aa).

Belongs to the KdsB family. Homodimer.

The protein localises to the cytoplasm. The catalysed reaction is 3-deoxy-alpha-D-manno-oct-2-ulosonate + CTP = CMP-3-deoxy-beta-D-manno-octulosonate + diphosphate. It functions in the pathway nucleotide-sugar biosynthesis; CMP-3-deoxy-D-manno-octulosonate biosynthesis; CMP-3-deoxy-D-manno-octulosonate from 3-deoxy-D-manno-octulosonate and CTP: step 1/1. Its pathway is bacterial outer membrane biogenesis; lipopolysaccharide biosynthesis. In terms of biological role, activates KDO (a required 8-carbon sugar) for incorporation into bacterial lipopolysaccharide in Gram-negative bacteria. The chain is 3-deoxy-manno-octulosonate cytidylyltransferase (kpsU) from Escherichia coli.